The sequence spans 241 residues: Putative ABC transporter ATP-binding protein CA_C0773 (241 aa).

Residues isoleucine 2–isoleucine 241 enclose the ABC transporter domain. ATP is bound at residue glycine 34 to serine 41.

The protein belongs to the ABC transporter superfamily.

It localises to the cell membrane. Functionally, probably part of an ABC transporter complex. Responsible for energy coupling to the transport system. The sequence is that of Putative ABC transporter ATP-binding protein CA_C0773 from Clostridium acetobutylicum (strain ATCC 824 / DSM 792 / JCM 1419 / IAM 19013 / LMG 5710 / NBRC 13948 / NRRL B-527 / VKM B-1787 / 2291 / W).